We begin with the raw amino-acid sequence, 454 residues long: MSNTDTIVAQATPPGRGGVGILRVSGRAAAEVAQAVLGKLPKPRHADYLPFRDANGTTLDQGIALWFPGPNSFTGEDVLELQGHGGPVILDLLLKRILTLPNVRIARPGEFSERAFLNDKLDLAQAEAIADLIDASSEQAARSALNSLQGVFSTRVNQLVEALTHLRIYVEAAIDFPDEEIDFLSDGKIESQLNGVMADLDAVRAEAHQGSLLREGMKVVIAGRPNAGKSSLLNALAGREAAIVTDIAGTTRDVLREHIHIDGMPLHIIDTAGLRDASDEVERIGIERAWQEIEQADRVLFMVDGTTTQATEPEQIWPEFMARLPKTLPITVVRNKADVTGETLGIEDVNTHSLIRLSARTGDGVDTLRDHLKQSMGFTSNTEGGFLARRRHLQALELAAQHLIQGKEQLVSAYAGELLAEELRLAQQSLSEITGEFTSDDLLGRIFSSFCIGK.

(6S)-5-formyl-5,6,7,8-tetrahydrofolate-binding residues include R23, E80, and K120. The TrmE-type G domain maps to 216–377; it reads GMKVVIAGRP…LRDHLKQSMG (162 aa). N226 lines the K(+) pocket. GTP is bound by residues 226 to 231, 245 to 251, 270 to 273, 335 to 338, and 358 to 360; these read NAGKSS, TDIAGTT, DTAG, NKAD, and SAR. Mg(2+) is bound at residue S230. Residues T245, I247, and T250 each coordinate K(+). T251 contributes to the Mg(2+) binding site. K454 lines the (6S)-5-formyl-5,6,7,8-tetrahydrofolate pocket.

It belongs to the TRAFAC class TrmE-Era-EngA-EngB-Septin-like GTPase superfamily. TrmE GTPase family. As to quaternary structure, homodimer. Heterotetramer of two MnmE and two MnmG subunits. It depends on K(+) as a cofactor.

The protein localises to the cytoplasm. Functionally, exhibits a very high intrinsic GTPase hydrolysis rate. Involved in the addition of a carboxymethylaminomethyl (cmnm) group at the wobble position (U34) of certain tRNAs, forming tRNA-cmnm(5)s(2)U34. The protein is tRNA modification GTPase MnmE of Pectobacterium carotovorum subsp. carotovorum (strain PC1).